Reading from the N-terminus, the 343-residue chain is Protein RecA (343 aa).

An ATP-binding site is contributed by 64 to 71; sequence GPESSGKT.

It belongs to the RecA family.

The protein resides in the cytoplasm. Its function is as follows. Can catalyze the hydrolysis of ATP in the presence of single-stranded DNA, the ATP-dependent uptake of single-stranded DNA by duplex DNA, and the ATP-dependent hybridization of homologous single-stranded DNAs. It interacts with LexA causing its activation and leading to its autocatalytic cleavage. The polypeptide is Protein RecA (Cereibacter sphaeroides (strain ATCC 17023 / DSM 158 / JCM 6121 / CCUG 31486 / LMG 2827 / NBRC 12203 / NCIMB 8253 / ATH 2.4.1.) (Rhodobacter sphaeroides)).